Reading from the N-terminus, the 159-residue chain is MINYLKSFFLYEIIRGMSLTLKYFFKPKVTINYPYEKSHVSPRFKGEHALRRYESGEERCIACKLCEAICPAQAIVIEADEREDGSRRTTRYDIDMTKCIYCGLCQEACPVDAIVEGPNFEFASLTHAALIYDKERLLQNGDRWEQALASKLHKDYEYR.

4Fe-4S ferredoxin-type domains are found at residues 51 to 80 and 90 to 119; these read RRYE…IEAD and TRYD…EGPN. [4Fe-4S] cluster contacts are provided by cysteine 60, cysteine 63, cysteine 66, cysteine 70, cysteine 99, cysteine 102, cysteine 105, and cysteine 109.

It belongs to the complex I 23 kDa subunit family. In terms of assembly, NDH-1 is composed of 14 different subunits. Subunits NuoA, H, J, K, L, M, N constitute the membrane sector of the complex. Requires [4Fe-4S] cluster as cofactor.

The protein resides in the cell inner membrane. It carries out the reaction a quinone + NADH + 5 H(+)(in) = a quinol + NAD(+) + 4 H(+)(out). NDH-1 shuttles electrons from NADH, via FMN and iron-sulfur (Fe-S) centers, to quinones in the respiratory chain. The immediate electron acceptor for the enzyme in this species is believed to be ubiquinone. Couples the redox reaction to proton translocation (for every two electrons transferred, four hydrogen ions are translocated across the cytoplasmic membrane), and thus conserves the redox energy in a proton gradient. This chain is NADH-quinone oxidoreductase subunit I, found in Rickettsia akari (strain Hartford).